Here is a 327-residue protein sequence, read N- to C-terminus: Ribonucleoside-diphosphate reductase small chain (327 aa).

The Fe cation site is built by aspartate 70, glutamate 101, and histidine 104. Residue tyrosine 108 is part of the active site. Fe cation is bound by residues glutamate 164, glutamate 198, and histidine 201.

This sequence belongs to the ribonucleoside diphosphate reductase small chain family. As to quaternary structure, heterotetramer composed of a homodimer of the large subunit (R1) and a homodimer of the small subunit (R2). Larger multisubunit protein complex are also active, composed of (R1)n(R2)n. Fe cation is required as a cofactor.

The enzyme catalyses a 2'-deoxyribonucleoside 5'-diphosphate + [thioredoxin]-disulfide + H2O = a ribonucleoside 5'-diphosphate + [thioredoxin]-dithiol. Functionally, ribonucleoside-diphosphate reductase holoenzyme provides the precursors necessary for viral DNA synthesis. Allows virus growth in non-dividing cells. Catalyzes the biosynthesis of deoxyribonucleotides from the corresponding ribonucleotides. This is Ribonucleoside-diphosphate reductase small chain from Ornithodoros (relapsing fever ticks).